Reading from the N-terminus, the 1919-residue chain is Disks large homolog 5 (1919 aa).

Positions 98 to 142 (AEGAGSTYSVLSTMPSDSESSSSLSSVGTTGKAPSPPPLLTDQQV) are disordered. The segment covering 109-123 (STMPSDSESSSSLSS) has biased composition (low complexity). Phosphoserine is present on residues S264 and S295. A coiled-coil region spans residues 383-599 (LNKATAQNKD…LEKEARFRQL (217 aa)). PDZ domains lie at 620-710 (VVEF…RRRK) and 705-796 (VVRR…LKVF). Phosphoserine is present on S900. Disordered stretches follow at residues 927–1122 (GVGE…FRPK), 1150–1187 (QEWA…PSTT), 1201–1230 (SHRV…HQGR), 1245–1264 (EMRA…LGSS), and 1271–1306 (AERI…PQSP). T984 carries the phosphothreonine modification. Position 1000 is a phosphoserine (S1000). The residue at position 1011 (T1011) is a Phosphothreonine. Residues 1017 to 1030 (RRSDSIKFQHRLET) are compositionally biased toward basic and acidic residues. S1021 carries the post-translational modification Phosphoserine. Over residues 1045–1055 (TSPPSALPPDV) the composition is skewed to pro residues. T1183 carries the phosphothreonine modification. Phosphoserine is present on residues S1209 and S1263. Composition is skewed to low complexity over residues 1252 to 1264 (SNSL…LGSS) and 1284 to 1298 (RSVV…SHSE). S1334 is modified (phosphoserine). A PDZ 3 domain is found at 1350–1429 (HVKVQKGSEP…TITILAQYNP (80 aa)). A disordered region spans residues 1434–1493 (LSSHSRSSSHLDPAGTHSTLQGSGTTTPEHPSVIDPLMEQDEGPSTPPAKQSSSRIAGDA). The span at 1449 to 1462 (THSTLQGSGTTTPE) shows a compositional bias: polar residues. The region spanning 1501–1582 (RVVFIKKSQL…GVRLKVQYRP (82 aa)) is the PDZ 4 domain. In terms of domain architecture, SH3 spans 1593-1661 (GDSFYIRALY…PSKYVMDQEF (69 aa)). At S1666 the chain carries Phosphoserine. Residues 1722–1905 (DSVSLAYQRV…ICTQILAMVN (184 aa)) form the Guanylate kinase-like domain.

It belongs to the MAGUK family. In terms of assembly, interacts with MPP1. Interacts with CTNNB1 and with the third SH3 domain of SORBS3 to form a ternary complex. Interacts (via coiled-coil domain) with MARK3. Interacts (via PDZ domain 3) with STK3/MST2 and STK4/MST1. Interacts with SCRIB. Interacts with CTNB1, SMO and (via PDZ4 or guanylate kinase-like domain) with KIF7. As to expression, highly expressed in normal breast tissues and low-grade breast cancer tissues (at protein level). Highly expressed in the placenta and prostate. Expressed at a lower level in the thyroid, spinal cord, trachea, adrenal gland, skeletal muscle, pancreas, heart, brain, liver and kidney. A short splice product shows more limited expression, being absent from at least the brain.

Its subcellular location is the cell junction. The protein localises to the cell membrane. It is found in the postsynaptic density. The protein resides in the cytoplasm. It localises to the cytoskeleton. Its subcellular location is the cilium basal body. Acts as a regulator of the Hippo signaling pathway. Negatively regulates the Hippo signaling pathway by mediating the interaction of MARK3 with STK3/4, bringing them together to promote MARK3-dependent hyperphosphorylation and inactivation of STK3 kinase activity toward LATS1. Positively regulates the Hippo signaling pathway by mediating the interaction of SCRIB with STK4/MST1 and LATS1 which is important for the activation of the Hippo signaling pathway. Involved in regulating cell proliferation, maintenance of epithelial polarity, epithelial-mesenchymal transition (EMT), cell migration and invasion. Plays an important role in dendritic spine formation and synaptogenesis in cortical neurons; regulates synaptogenesis by enhancing the cell surface localization of N-cadherin. Acts as a positive regulator of hedgehog (Hh) signaling pathway. Plays a critical role in the early point of the SMO activity cycle by interacting with SMO at the ciliary base to induce the accumulation of KIF7 and GLI2 at the ciliary tip for GLI2 activation. In Homo sapiens (Human), this protein is Disks large homolog 5 (DLG5).